The chain runs to 641 residues: Probable ATP-dependent helicase YpvA (641 aa).

The Helicase ATP-binding domain occupies 29-303 (YDILPEKGFD…EFAELIEDAL (275 aa)). Residue 64–71 (AGVGTGKT) coordinates ATP. Residues cysteine 133, cysteine 197, cysteine 200, and cysteine 206 each contribute to the [4Fe-4S] cluster site. Positions 257 to 260 (DEGH) match the DEGH box motif.

The protein belongs to the helicase family. DinG subfamily. [4Fe-4S] cluster is required as a cofactor.

The catalysed reaction is Couples ATP hydrolysis with the unwinding of duplex DNA at the replication fork by translocating in the 5'-3' direction. This creates two antiparallel DNA single strands (ssDNA). The leading ssDNA polymer is the template for DNA polymerase III holoenzyme which synthesizes a continuous strand.. It carries out the reaction ATP + H2O = ADP + phosphate + H(+). In terms of biological role, might be a 5'-3' DNA helicase. This Bacillus subtilis (strain 168) protein is Probable ATP-dependent helicase YpvA (ypvA).